Reading from the N-terminus, the 521-residue chain is Acetyl-CoA hydrolase (521 aa).

276–280 (GIGNI) serves as a coordination point for CoA. Glu-301 (5-glutamyl coenzyme A thioester intermediate) is an active-site residue. CoA-binding residues include Asn-391 and Gly-395.

This sequence belongs to the acetyl-CoA hydrolase/transferase family.

It is found in the cytoplasm. The catalysed reaction is acetyl-CoA + H2O = acetate + CoA + H(+). Functionally, presumably involved in regulating the intracellular acetyl-CoA pool for fatty acid and cholesterol synthesis and fatty acid oxidation. This chain is Acetyl-CoA hydrolase (ach1), found in Schizosaccharomyces pombe (strain 972 / ATCC 24843) (Fission yeast).